Consider the following 305-residue polypeptide: NADH-cytochrome b5 reductase 1 (305 aa).

A helical transmembrane segment spans residues 8-28 (VLLASLGVGLLTLLGVALGAY). Residues 44–156 (NEKYQLRLLD…RGPSGLLTYA (113 aa)) enclose the FAD-binding FR-type domain. Residues 136 to 166 (DSLKIGDVVEFRGPSGLLTYAGKGKFNIQPN) and 175 to 210 (VARNLGMIAGGTGITPMLQLIRAILKDPEDPTQCFL) contribute to the FAD site.

It belongs to the flavoprotein pyridine nucleotide cytochrome reductase family. The cofactor is FAD.

It is found in the membrane. The catalysed reaction is 2 Fe(III)-[cytochrome b5] + NADH = 2 Fe(II)-[cytochrome b5] + NAD(+) + H(+). NADH-cytochrome b5 reductases are involved in desaturation and elongation of fatty acids, cholesterol biosynthesis, drug metabolism, and, in erythrocyte, methemoglobin reduction. The sequence is that of NADH-cytochrome b5 reductase 1 (CYB5R1) from Bos taurus (Bovine).